A 181-amino-acid chain; its full sequence is ATP-dependent protease subunit HslV (181 aa).

Residue T7 is part of the active site. Positions 165, 168, and 171 each coordinate Na(+).

It belongs to the peptidase T1B family. HslV subfamily. A double ring-shaped homohexamer of HslV is capped on each side by a ring-shaped HslU homohexamer. The assembly of the HslU/HslV complex is dependent on binding of ATP.

The protein resides in the cytoplasm. It carries out the reaction ATP-dependent cleavage of peptide bonds with broad specificity.. Its activity is regulated as follows. Allosterically activated by HslU binding. Functionally, protease subunit of a proteasome-like degradation complex believed to be a general protein degrading machinery. The polypeptide is ATP-dependent protease subunit HslV (Lysinibacillus sphaericus (strain C3-41)).